Consider the following 1045-residue polypeptide: MDIS1-interacting receptor like kinase 2 (1045 aa).

Positions 1–43 (MNKTNPERKISLTSFKERMACKEKPRDLQVLLIISIVLSCSFA) are cleaved as a signal peptide. The Extracellular segment spans residues 44 to 709 (VSATVEEANA…SKKSHKDRNL (666 aa)). N-linked (GlcNAc...) asparagine glycosylation is found at asparagine 63, asparagine 77, asparagine 99, and asparagine 119. LRR repeat units follow at residues 92–116 (LGSI…PFSS), 117–140 (LPNL…LWGR), 141–165 (FSKL…LGDL), 166–189 (SNLD…IGRL), 191–212 (KVTE…SFGN), 213–237 (LTKL…IGNL), 238–260 (PNLR…SFGN), 262–285 (KNVT…IGNM), 286–309 (TALD…LGNI), 311–333 (TLAV…LGEM), 334–356 (ESMI…SFGK), 357–381 (LTAL…IANS), 383–405 (ELTV…ICRG), 406–429 (GKLE…LRDC), 431–452 (SLIR…AFGV), 453–476 (YPTL…NWEQ), 477–501 (SQKL…IWNM), 502–525 (TQLS…ISNI), 527–549 (RISK…IRLL), 550–573 (TNLE…LNNL), 575–597 (RLYY…LTKL), 598–620 (SQLQ…QFRS), 621–644 (LQNL…SFKD), and 646–670 (LALT…AFRN). Asparagine 179 and asparagine 212 each carry an N-linked (GlcNAc...) asparagine glycan. 3 N-linked (GlcNAc...) asparagine glycosylation sites follow: asparagine 249, asparagine 263, and asparagine 284. N-linked (GlcNAc...) asparagine glycosylation occurs at asparagine 323. Residues asparagine 380, asparagine 393, and asparagine 410 are each glycosylated (N-linked (GlcNAc...) asparagine). 2 N-linked (GlcNAc...) asparagine glycosylation sites follow: asparagine 487 and asparagine 500. N-linked (GlcNAc...) asparagine glycosylation is present at asparagine 580. N-linked (GlcNAc...) asparagine glycosylation occurs at asparagine 633. Asparagine 687 is a glycosylation site (N-linked (GlcNAc...) asparagine). A helical membrane pass occupies residues 710-730 (IIYILVPIIGAIIILSVCAGI). Over 731 to 1045 (FICFRKRTKQ…TMLSISTAFS (315 aa)) the chain is Cytoplasmic. Phosphothreonine is present on threonine 772. In terms of domain architecture, Protein kinase spans 775–1045 (FDPKYLIGTG…TMLSISTAFS (271 aa)). ATP-binding positions include 781–789 (IGTGGHGKV) and lysine 802. Tyrosine 853 and tyrosine 892 each carry phosphotyrosine. The active-site Proton acceptor is the aspartate 905. Phosphoserine is present on serine 938. Residues tyrosine 946 and tyrosine 953 each carry the phosphotyrosine modification.

Belongs to the protein kinase superfamily. Ser/Thr protein kinase family. As to quaternary structure, interacts with MDIS1 and LURE1.2. Binds to SCOOP12; this interaction triggers the formation of complex between MIK2 and the BAK1/SERK3 and SERK4 coreceptors. Expressed in pollen tubes. Highly expressed in shoots, roots and leaves.

It localises to the cell membrane. It catalyses the reaction L-seryl-[protein] + ATP = O-phospho-L-seryl-[protein] + ADP + H(+). The enzyme catalyses L-threonyl-[protein] + ATP = O-phospho-L-threonyl-[protein] + ADP + H(+). Acts as a receptor of SCOOP peptides from Brassicaceae plants regulating multiple processing including plant growth, development and stress responses. Perception of SCOOP peptides induces the association of MIK2 with the coreceptors BAK1/SERK3 and SERK4 and relays the signaling through the activation of receptor-like cytosolic kinases (RLCKs) BIK1 and PBL1. Also able to detect SCOOP-like proteins (SCOOPL) present in fungal Fusarium spp. and bacterial Comamonadaceae to elicit various immune responses, including growth inhibition, ROS production, calcium Ca(2+) influx, MAPK activation and MYB51 promoter activation in roots, thus being required for resistance to several root pathogens. Involved in the pollen tube perception of the female signal. Required to trigger defense responses toward generalist herbivores such as Spodoptera littoralis, probably via the activation of jasmonate and indole glucosinolate biosynthesis. This is MDIS1-interacting receptor like kinase 2 from Arabidopsis thaliana (Mouse-ear cress).